Consider the following 330-residue polypeptide: tRNA pseudouridine synthase B (330 aa).

Aspartate 42 functions as the Nucleophile in the catalytic mechanism.

Belongs to the pseudouridine synthase TruB family. Type 1 subfamily.

It carries out the reaction uridine(55) in tRNA = pseudouridine(55) in tRNA. In terms of biological role, responsible for synthesis of pseudouridine from uracil-55 in the psi GC loop of transfer RNAs. The chain is tRNA pseudouridine synthase B from Lactococcus lactis subsp. cremoris (strain MG1363).